The primary structure comprises 581 residues: Invertase (581 aa).

The first 22 residues, 1 to 22 (MFLKYILASGICLVSLLSSTNA), serve as a signal peptide directing secretion. 6 N-linked (GlcNAc...) asparagine glycosylation sites follow: Asn37, Asn40, Asn46, Asn57, Asn62, and Asn79. Substrate-binding positions include 94–97 (FMND), Gln113, and 158–159 (FS). Asp97 is a catalytic residue. Asn168 and Asn175 each carry an N-linked (GlcNAc...) asparagine glycan. Residues 227 to 228 (RD) and Glu280 each bind substrate. Asn322 carries an N-linked (GlcNAc...) asparagine glycan. Residue Trp366 coordinates substrate. Residues Asn399, Asn409, Asn425, Asn446, Asn452, Asn519, and Asn569 are each glycosylated (N-linked (GlcNAc...) asparagine).

The protein belongs to the glycosyl hydrolase 32 family. Glycosylated; contains 67% carbohydrates. This is composed of equimolar amounts of mannose and galactose. There is also a small amount of glucosamine present.

It catalyses the reaction Hydrolysis of terminal non-reducing beta-D-fructofuranoside residues in beta-D-fructofuranosides.. This is Invertase (inv1) from Schizosaccharomyces pombe (strain 972 / ATCC 24843) (Fission yeast).